The sequence spans 200 residues: MLDAALIKECADPSLKPAIVEQFVAAAGSTDPLAVSVESGGRLILVPKATSAGEAMAIVRQYVGQAVVRVGLTQFPVGVGVKNAADLQPDLVDACENLRKGTSMFAKVLRIVAKSYGNPESDDVIPQIFEDAVYAWKTGEFEGVSVFQAPDPGGSVATEEVLRSDDRDSHTQDSASEWPEGNDSVGSAAMRIDLSRIGGT.

The segment at Ala-149 to Thr-200 is disordered. The span at Glu-160–Thr-171 shows a compositional bias: basic and acidic residues.

The protein to A.tumefaciens Ti plasmid conjugal transfer region I ORFR2 and ORFR3.

This is an uncharacterized protein from Sinorhizobium fredii (strain NBRC 101917 / NGR234).